Here is a 308-residue protein sequence, read N- to C-terminus: tRNA dimethylallyltransferase (308 aa).

9–16 (GPTAVGKT) contributes to the ATP binding site. A substrate-binding site is contributed by 11–16 (TAVGKT). Positions 34–37 (DSMQ) are interaction with substrate tRNA.

This sequence belongs to the IPP transferase family. As to quaternary structure, monomer. Mg(2+) serves as cofactor.

The catalysed reaction is adenosine(37) in tRNA + dimethylallyl diphosphate = N(6)-dimethylallyladenosine(37) in tRNA + diphosphate. Catalyzes the transfer of a dimethylallyl group onto the adenine at position 37 in tRNAs that read codons beginning with uridine, leading to the formation of N6-(dimethylallyl)adenosine (i(6)A). The protein is tRNA dimethylallyltransferase of Lactobacillus delbrueckii subsp. bulgaricus (strain ATCC BAA-365 / Lb-18).